The chain runs to 153 residues: MMTPRQRRMTWVALMVAGVSLAAFFALTAFQKNLLYFYTPSQVASGEAPKGYPFRIGGLVVKDSVKREPDSLTVRFEVSDGPNAVPVLYTGILPDLFREGQGIIAVGQIDDGGTFQATEVLAKHDENYMPPEVAESLKKNGGLPADYSEYRKK.

Over 1-8 (MMTPRQRR) the chain is Cytoplasmic. A helical; Signal-anchor for type II membrane protein membrane pass occupies residues 9 to 29 (MTWVALMVAGVSLAAFFALTA). At 30-153 (FQKNLLYFYT…PADYSEYRKK (124 aa)) the chain is on the periplasmic side. Positions 124 and 128 each coordinate heme. Residues 134–153 (AESLKKNGGLPADYSEYRKK) are disordered.

It belongs to the CcmE/CycJ family.

The protein resides in the cell inner membrane. Its function is as follows. Heme chaperone required for the biogenesis of c-type cytochromes. Transiently binds heme delivered by CcmC and transfers the heme to apo-cytochromes in a process facilitated by CcmF and CcmH. The chain is Cytochrome c-type biogenesis protein CcmE from Methylococcus capsulatus (strain ATCC 33009 / NCIMB 11132 / Bath).